The chain runs to 113 residues: U11-theraphotoxin-Hhn1a (113 aa).

An N-terminal signal peptide occupies residues 1-21 (MNTVRVTFLLVFVLAVSLGQA). Residues 22–74 (DKDENRMEMQEKTEQGKSYLDFAENLLLQKLEELEAKLLEEDSEESRNSRQRR) constitute a propeptide that is removed on maturation. Residues 61 to 83 (EEDSEESRNSRQRRCIGEGVPCD) form a disordered region. Disulfide bonds link cysteine 75-cysteine 90, cysteine 82-cysteine 95, and cysteine 89-cysteine 110.

It belongs to the neurotoxin 14 (magi-1) family. 01 (HNTX-16) subfamily. In terms of tissue distribution, expressed by the venom gland.

The protein resides in the secreted. Functionally, probable ion channel inhibitor. The sequence is that of U11-theraphotoxin-Hhn1a from Cyriopagopus hainanus (Chinese bird spider).